We begin with the raw amino-acid sequence, 122 residues long: Large ribosomal subunit protein uL14c (122 aa).

Belongs to the universal ribosomal protein uL14 family. In terms of assembly, part of the 50S ribosomal subunit.

It localises to the plastid. Its function is as follows. Binds to 23S rRNA. The sequence is that of Large ribosomal subunit protein uL14c from Cuscuta gronovii (Common dodder).